The following is a 128-amino-acid chain: Large ribosomal subunit protein bL17 (128 aa).

It belongs to the bacterial ribosomal protein bL17 family. As to quaternary structure, part of the 50S ribosomal subunit. Contacts protein L32.

This chain is Large ribosomal subunit protein bL17, found in Hydrogenovibrio crunogenus (strain DSM 25203 / XCL-2) (Thiomicrospira crunogena).